The chain runs to 242 residues: Biosynthetic peptidoglycan transglycosylase (242 aa).

Residues 19–39 (LMVVLAVFWGGGIALFSVAPV) traverse the membrane as a helical segment.

It belongs to the glycosyltransferase 51 family.

It is found in the cell inner membrane. It carries out the reaction [GlcNAc-(1-&gt;4)-Mur2Ac(oyl-L-Ala-gamma-D-Glu-L-Lys-D-Ala-D-Ala)](n)-di-trans,octa-cis-undecaprenyl diphosphate + beta-D-GlcNAc-(1-&gt;4)-Mur2Ac(oyl-L-Ala-gamma-D-Glu-L-Lys-D-Ala-D-Ala)-di-trans,octa-cis-undecaprenyl diphosphate = [GlcNAc-(1-&gt;4)-Mur2Ac(oyl-L-Ala-gamma-D-Glu-L-Lys-D-Ala-D-Ala)](n+1)-di-trans,octa-cis-undecaprenyl diphosphate + di-trans,octa-cis-undecaprenyl diphosphate + H(+). The protein operates within cell wall biogenesis; peptidoglycan biosynthesis. Peptidoglycan polymerase that catalyzes glycan chain elongation from lipid-linked precursors. The polypeptide is Biosynthetic peptidoglycan transglycosylase (Escherichia coli O157:H7).